The following is a 284-amino-acid chain: tRNA uridine(34) hydroxylase (284 aa).

Residues 132–226 (AGRPVVMLDT…YFEEVGGAHY (95 aa)) enclose the Rhodanese domain. Cys186 acts as the Cysteine persulfide intermediate in catalysis.

Belongs to the TrhO family.

It carries out the reaction uridine(34) in tRNA + AH2 + O2 = 5-hydroxyuridine(34) in tRNA + A + H2O. Functionally, catalyzes oxygen-dependent 5-hydroxyuridine (ho5U) modification at position 34 in tRNAs. The polypeptide is tRNA uridine(34) hydroxylase (Burkholderia orbicola (strain MC0-3)).